We begin with the raw amino-acid sequence, 443 residues long: Zinc finger protein 713 (443 aa).

Positions M1–Q10 are enriched in polar residues. Disordered stretches follow at residues M1–S23 and D99–N118. The KRAB domain maps to L32–P102. A compositionally biased stretch (basic and acidic residues) spans D99 to K112. Residues H255–L280 form a C2H2-type 1; degenerate zinc finger. 5 C2H2-type zinc fingers span residues Y286–H308, F314–H336, Y342–H364, Y370–H392, and Y398–H420.

This sequence belongs to the krueppel C2H2-type zinc-finger protein family. In terms of tissue distribution, expressed in fetal and adult brain.

Its subcellular location is the nucleus. Its function is as follows. May be involved in transcriptional regulation. The sequence is that of Zinc finger protein 713 from Homo sapiens (Human).